A 352-amino-acid polypeptide reads, in one-letter code: Strictosidine synthase (352 aa).

The N-terminal stretch at 1-31 is a signal peptide; the sequence is MANFSESKSMMAVFFMFFLLLLSSSSSSSSS. N-linked (GlcNAc...) asparagine glycosylation is found at Asn-95 and Asn-187.

The protein belongs to the strictosidine synthase family. As to quaternary structure, monomer.

It is found in the vacuole. It carries out the reaction 3alpha(S)-strictosidine + H2O = secologanin + tryptamine. Its pathway is alkaloid biosynthesis; 3alpha(S)-strictosidine biosynthesis; 3alpha(S)-strictosidine from secologanin and tryptamine: step 1/1. Functionally, catalyzes the stereospecific condensation of tryptamine with secologanin to form strictosidine, the key intermediate of indole alkaloid biosynthesis. This chain is Strictosidine synthase (STR1), found in Catharanthus roseus (Madagascar periwinkle).